Consider the following 440-residue polypeptide: Alpha-methylserine aldolase (440 aa).

Residue Lys255 is modified to N6-(pyridoxal phosphate)lysine.

The protein belongs to the SHMT family. Alpha-methylserine aldolase subfamily. As to quaternary structure, homodimer. Pyridoxal 5'-phosphate is required as a cofactor.

It carries out the reaction 2-methyl-L-serine = formaldehyde + L-alanine. Catalyzes the reversible interconversion of alpha-methyl-L-serine to L-alanine and formaldehyde. The chain is Alpha-methylserine aldolase from Variovorax paradoxus.